The sequence spans 113 residues: Colicin-E1* immunity protein (113 aa).

Its function is as follows. This protein is able to protect a cell, which harbors the plasmid pKY-1 encoding colicin E1*, against colicin E1*. In Shigella sonnei, this protein is Colicin-E1* immunity protein (imm).